Here is a 262-residue protein sequence, read N- to C-terminus: RNA-binding protein 7 (262 aa).

Position 2 is an N-acetylglycine (Gly2). The RRM domain occupies 10–87 (RTLFVGNLET…RPIKIQFRAG (78 aa)). ZCCHC8 binding stretches follow at residues 25–35 (LLFELFHQAGP) and 59–76 (HEVS…IKLF). Residues 95-121 (VSLSYPQHHVGNSSPTSTSPSRTVDNM) form a disordered region. A phosphoserine mark is found at Ser133 and Ser134. Omega-N-methylarginine is present on Arg149. Disordered stretches follow at residues 159-212 (SPHL…HYSR) and 242-262 (SHDY…SSRH). Residues 165–194 (SGFSPSAQSHNHTFNQSSSSQWRQDTPSSQ) show a composition bias toward polar residues. Ser201 is modified (phosphoserine). The span at 242–253 (SHDYDNRRDSGR) shows a compositional bias: basic and acidic residues.

Component of the nuclear exosome targeting (NEXT) complex composed of MTREX, ZCCHC8, and RBM7 that directs a subset of non-coding short-lived RNAs for exosomal degradation. Interacts with ZCCHC8 and SF3B2/SAP145. Binds to MTREX through ZCCHC8. Interacts with YWHAE and YWHAZ; these interactions are stress-dependent and RBM7 phosphorylation dependent; release RNA from the NEXT complex and may affect RNA targeting to the nuclear RNA exosomome for degradation. Interacts with MEPCE and LARP7, the core subunits of 7SK snRNP; upon genotoxic stress this interaction is enhanced, triggering the release of inactive P-TEFb complex from the core and P-TEFb complex activation. Phosphorylated at Ser-133 by MAPK14/p38-alpha-activated MAPKAPK2/MK2; this phosphorylation is stress-dependent; this phosphorylation decreases its RNA-binding capacity therefore affecting RNA nuclear exosome-mediated degradation. This phosphorylation mediates YWHAE and YWHAZ interactions.

It localises to the nucleus. The protein localises to the nucleoplasm. Functionally, RNA-binding subunit of the trimeric nuclear exosome targeting (NEXT) complex, a complex that functions as an RNA exosome cofactor that directs a subset of non-coding short-lived RNAs for exosomal degradation. NEXT is involved in surveillance and turnover of aberrant transcripts and non-coding RNAs. Binds preferentially polyuridine sequences and associates with newly synthesized RNAs, including pre-mRNAs and short-lived exosome substrates such as promoter upstream transcripts (PROMPTs), enhancer RNAs (eRNAs), and 3'-extended products from small nuclear RNAs (snRNAs). Participates in several biological processes including DNA damage response (DDR) and stress response. During stress response, activation of the p38MAPK-MK2 pathway decreases RBM7-RNA-binding and subsequently the RNA exosome degradation activities, thereby modulating the turnover of non-coding transcriptome. Participates in DNA damage response (DDR), through its interaction with MEPCE and LARP7, the core subunits of 7SK snRNP complex, that release the positive transcription elongation factor b (P-TEFb) complex from the 7SK snRNP. In turn, activation of P-TEFb complex induces the transcription of P-TEFb-dependent DDR genes to promote cell viability. The chain is RNA-binding protein 7 from Bos taurus (Bovine).